A 103-amino-acid chain; its full sequence is Co-chaperonin GroES (103 aa).

A disordered region spans residues 31–67; sequence GGILLPDTAKEKPQVGEVAQVGPGKRNEDGSRQSPEV.

It belongs to the GroES chaperonin family. Heptamer of 7 subunits arranged in a ring. Interacts with the chaperonin GroEL.

The protein resides in the cytoplasm. Its function is as follows. Together with the chaperonin GroEL, plays an essential role in assisting protein folding. The GroEL-GroES system forms a nano-cage that allows encapsulation of the non-native substrate proteins and provides a physical environment optimized to promote and accelerate protein folding. GroES binds to the apical surface of the GroEL ring, thereby capping the opening of the GroEL channel. The protein is Co-chaperonin GroES of Prochlorococcus marinus (strain NATL2A).